The following is a 265-amino-acid chain: 3-methyl-2-oxobutanoate hydroxymethyltransferase (265 aa).

Positions 43 and 82 each coordinate Mg(2+). 3-methyl-2-oxobutanoate contacts are provided by residues 43–44 (DS), aspartate 82, and lysine 111. A Mg(2+)-binding site is contributed by glutamate 113. Glutamate 180 functions as the Proton acceptor in the catalytic mechanism.

It belongs to the PanB family. Homodecamer; pentamer of dimers. The cofactor is Mg(2+).

It localises to the cytoplasm. It catalyses the reaction 3-methyl-2-oxobutanoate + (6R)-5,10-methylene-5,6,7,8-tetrahydrofolate + H2O = 2-dehydropantoate + (6S)-5,6,7,8-tetrahydrofolate. It functions in the pathway cofactor biosynthesis; (R)-pantothenate biosynthesis; (R)-pantoate from 3-methyl-2-oxobutanoate: step 1/2. Functionally, catalyzes the reversible reaction in which hydroxymethyl group from 5,10-methylenetetrahydrofolate is transferred onto alpha-ketoisovalerate to form ketopantoate. This is 3-methyl-2-oxobutanoate hydroxymethyltransferase from Francisella tularensis subsp. mediasiatica (strain FSC147).